The primary structure comprises 100 residues: MTPWFLYLIRTADNKLYTGITTDVERRYQQHQSGKGAKALRGKGELTLAFSAPVGDRSLALRAEYRVKQLTKRQKERLVAESAGFAELLSSLQTPEIKSD.

One can recognise a GIY-YIG domain in the interval T2 to R77.

Belongs to the UPF0213 family.

The polypeptide is UPF0213 protein YhbQ (Escherichia coli O139:H28 (strain E24377A / ETEC)).